We begin with the raw amino-acid sequence, 621 residues long: 5-aminolevulinate synthase, mitochondrial (621 aa).

A disordered region spans residues 76–95 (DAKGSLAGRPVHHKAATEST). The substrate site is built by Arg-122 and Ser-234. Positions 286, 314, and 359 each coordinate pyridoxal 5'-phosphate. Residue Lys-362 is part of the active site. An N6-(pyridoxal phosphate)lysine modification is found at Lys-362. Residues Thr-391 and Thr-392 each contribute to the pyridoxal 5'-phosphate site. Thr-477 is a substrate binding site.

Belongs to the class-II pyridoxal-phosphate-dependent aminotransferase family. In terms of assembly, homodimer. It depends on pyridoxal 5'-phosphate as a cofactor.

Its subcellular location is the mitochondrion matrix. The enzyme catalyses succinyl-CoA + glycine + H(+) = 5-aminolevulinate + CO2 + CoA. It participates in porphyrin-containing compound metabolism; protoporphyrin-IX biosynthesis; 5-aminolevulinate from glycine: step 1/1. In terms of biological role, catalyzes the synthesis of 5-aminolevulinate (ALA) from succinyl-CoA and glycine, the first and rate-limiting step in heme biosynthesis. This is 5-aminolevulinate synthase, mitochondrial (hem1) from Agaricus bisporus (White button mushroom).